Consider the following 79-residue polypeptide: Acyl carrier protein (79 aa).

The Carrier domain occupies 2–77 (SDVLERVRKI…DAVKFIQERL (76 aa)). S37 carries the O-(pantetheine 4'-phosphoryl)serine modification.

Belongs to the acyl carrier protein (ACP) family. 4'-phosphopantetheine is transferred from CoA to a specific serine of apo-ACP by AcpS. This modification is essential for activity because fatty acids are bound in thioester linkage to the sulfhydryl of the prosthetic group.

The protein localises to the cytoplasm. Its pathway is lipid metabolism; fatty acid biosynthesis. Functionally, carrier of the growing fatty acid chain in fatty acid biosynthesis. The protein is Acyl carrier protein of Phenylobacterium zucineum (strain HLK1).